A 359-amino-acid polypeptide reads, in one-letter code: MTTTLQQRSGASSWQAFCEWVTSTNNRLYVGWFGVLMIPTLLAATICFVIAFVAAPPVDIDGIREPVAGSLIYGNNIISGAVVPSSNAIGLHFYPIWEAASLDEWLYNGGPFQLVVFHFLIGIYAYMGREWELSYRLGMRPWICVAYSAPVAAASAVFLVYPFGQGSFSDAMPLGISGTFNYMLVFQAEHNILMHPFHMLGVAGVFGGSLFSAMHGSLVTSSLVRETTETESQNYGYKFGQEEETYNIVAAHGYFGRLIFQYASFNNSRSLHFFLAAWPVVGIWFTALGVSTMAFNLNGFNFNQSILDGQGRVLNTWADVLNRAGLGMEVMHERNAHNFPLDLAAAESTPVALQVPAIG.

The next 3 helical transmembrane spans lie at 29 to 46 (YVGW…AATI), 118 to 133 (HFLI…EWEL), and 142 to 156 (WICV…AASA). His118 is a chlorophyll a binding site. Residue Tyr126 participates in pheophytin a binding. Asp170 and Glu189 together coordinate [CaMn4O5] cluster. A helical transmembrane segment spans residues 197–218 (FHMLGVAGVFGGSLFSAMHGSL). Residue His198 coordinates chlorophyll a. Residues His215 and 264–265 (SF) each bind a quinone. Position 215 (His215) interacts with Fe cation. Position 272 (His272) interacts with Fe cation. The chain crosses the membrane as a helical span at residues 274-288 (FLAAWPVVGIWFTAL). [CaMn4O5] cluster contacts are provided by His332, Glu333, Asp342, and Ala344. The propeptide occupies 345–359 (AAESTPVALQVPAIG).

Belongs to the reaction center PufL/M/PsbA/D family. In terms of assembly, PSII is composed of 1 copy each of membrane proteins PsbA, PsbB, PsbC, PsbD, PsbE, PsbF, PsbH, PsbI, PsbJ, PsbK, PsbL, PsbM, PsbT, PsbX, PsbY, PsbZ, Psb30/Ycf12, peripheral proteins PsbO, CyanoQ (PsbQ), PsbU, PsbV and a large number of cofactors. It forms dimeric complexes. The D1/D2 heterodimer binds P680, chlorophylls that are the primary electron donor of PSII, and subsequent electron acceptors. It shares a non-heme iron and each subunit binds pheophytin, quinone, additional chlorophylls, carotenoids and lipids. D1 provides most of the ligands for the Mn4-Ca-O5 cluster of the oxygen-evolving complex (OEC). There is also a Cl(-1) ion associated with D1 and D2, which is required for oxygen evolution. The PSII complex binds additional chlorophylls, carotenoids and specific lipids. serves as cofactor. Tyr-161 forms a radical intermediate that is referred to as redox-active TyrZ, YZ or Y-Z. Post-translationally, C-terminally processed by CtpA; processing is essential to allow assembly of the oxygen-evolving complex and thus photosynthetic growth.

The protein localises to the cellular thylakoid membrane. The enzyme catalyses 2 a plastoquinone + 4 hnu + 2 H2O = 2 a plastoquinol + O2. Its function is as follows. Photosystem II (PSII) is a light-driven water:plastoquinone oxidoreductase that uses light energy to abstract electrons from H(2)O, generating O(2) and a proton gradient subsequently used for ATP formation. It consists of a core antenna complex that captures photons, and an electron transfer chain that converts photonic excitation into a charge separation. The D1/D2 (PsbA/PsbD) reaction center heterodimer binds P680, the primary electron donor of PSII as well as several subsequent electron acceptors. The polypeptide is Photosystem II protein D1 3 (Parasynechococcus marenigrum (strain WH8102)).